A 304-amino-acid chain; its full sequence is Undecaprenyl-diphosphatase (304 aa).

7 helical membrane passes run 1–21 (MSLLAAVFLGVLQAATEFLPV), 54–74 (TTLAVLVYFRTEILSLLAAGL), 90–110 (LAWFIVLGTVPAAVLGKLFEE), 114–134 (ALGNWVIAGSLVVLGLVLLAA), 192–212 (FLLSVPIILGAGGYKLWKTVP), 225–245 (LVGTAVSAVAGYLVIDWLLGW), and 253–273 (LFVVWRIAAGVALAILIWQGV).

It belongs to the UppP family.

Its subcellular location is the cell inner membrane. The enzyme catalyses di-trans,octa-cis-undecaprenyl diphosphate + H2O = di-trans,octa-cis-undecaprenyl phosphate + phosphate + H(+). Catalyzes the dephosphorylation of undecaprenyl diphosphate (UPP). Confers resistance to bacitracin. The sequence is that of Undecaprenyl-diphosphatase from Anaeromyxobacter sp. (strain Fw109-5).